Reading from the N-terminus, the 805-residue chain is Transitional endoplasmic reticulum ATPase (805 aa).

Ser-3 is subject to Phosphoserine. ATP-binding positions include 247-253 (PGTGKTL), Asn-348, His-384, and 521-526 (GCGKTL). The segment at 768-805 (FGSFRFPAGGQGGAGPSQGAGGGSGGSHFNEEEDDLYG) is disordered. Residues 776–793 (GGQGGAGPSQGAGGGSGG) show a composition bias toward gly residues.

This sequence belongs to the AAA ATPase family. As to quaternary structure, homohexamer. Forms a ring-shaped particle of 12.5 nm diameter, that displays 6-fold radial symmetry. Interacts with the FACT/DUF complex, which includes subunits ssrp1/duf87 and supt16h/duf140. In terms of processing, phosphorylated.

The protein resides in the cytoplasm. It localises to the cytosol. It is found in the endoplasmic reticulum. The protein localises to the nucleus. Its subcellular location is the stress granule. The catalysed reaction is ATP + H2O = ADP + phosphate + H(+). With respect to regulation, ATPase activity is inhibited or reduced by lowering pH from 9.0 to 7.0, and by addition of Ca(2+), EDTA, KNO(3) or by treatment with N-ethylmaleimide (NEM). Its function is as follows. Necessary for the fragmentation of Golgi stacks during mitosis and for their reassembly after mitosis. Involved in the formation of the nuclear envelope, and of the transitional endoplasmic reticulum (tER). The transfer of membranes from the endoplasmic reticulum to the Golgi apparatus occurs via 50-70 nm transition vesicles which derive from part-rough, part-smooth transitional elements of the endoplasmic reticulum (tER). Vesicle budding from the tER is an ATP-dependent process. Involved in endoplasmic reticulum stress-induced pre-emptive quality control, a mechanism that selectively attenuates the translocation of newly synthesized proteins into the endoplasmic reticulum and reroutes them to the cytosol for proteasomal degradation. Involved in clearance process by mediating G3BP1 extraction from stress granules. Also involved in DNA damage response: recruited to double-strand breaks (DSBs) sites and promotes the recruitment of tp53bp1 at DNA damage sites. Together with sprtn metalloprotease, involved in the repair of covalent DNA-protein cross-links (DPCs) during DNA synthesis. Involved in interstrand cross-link repair in response to replication stress by mediating unloading of the ubiquitinated CMG helicase complex. Enhances cell cycle progression and inhibits apoptosis at low temperatures. Essential for the maturation of ubiquitin-containing autophagosomes and the clearance of ubiquitinated protein by autophagy. Acts as a negative regulator of type I interferon production by promoting ubiquitination of rigi. May play a role in the ubiquitin-dependent sorting of membrane proteins to lysosomes where they undergo degradation. May more particularly play a role in caveolins sorting in cells. By controlling the steady-state expression of the IGF1R receptor, indirectly regulates the insulin-like growth factor receptor signaling pathway. The chain is Transitional endoplasmic reticulum ATPase from Xenopus tropicalis (Western clawed frog).